A 251-amino-acid chain; its full sequence is MEKTKPAAPSSVPRHVAIIMDGNNRWAKKRLLPGVAGHKAGVDAVRAVIEVCAKSGVEVLTLFAFSSENWQRPAEEVGALMELFFSALRREAKRLDENNISLRIIGDRSRFHPELQAAMREAEAVTAGNNRFILQIAANYGGQWDIAQAAQRLAREVQAGHLRPEDITPGLLQTCLATGDLPLPDLCIRTGGEHRISNFLLWQLAYAELYFSDLYWPDFKHEAMRNALADFASRQRRFGKTSEQVEAGARA.

Asp21 is an active-site residue. Asp21 is a binding site for Mg(2+). Substrate contacts are provided by residues 22-25 (GNNR), Trp26, His38, and 66-68 (SSE). Asn69 functions as the Proton acceptor in the catalytic mechanism. Substrate-binding positions include Trp70, Arg72, Arg189, and 195–197 (RIS). A Mg(2+)-binding site is contributed by Glu208.

It belongs to the UPP synthase family. In terms of assembly, homodimer. The cofactor is Mg(2+).

It carries out the reaction 8 isopentenyl diphosphate + (2E,6E)-farnesyl diphosphate = di-trans,octa-cis-undecaprenyl diphosphate + 8 diphosphate. Catalyzes the sequential condensation of isopentenyl diphosphate (IPP) with (2E,6E)-farnesyl diphosphate (E,E-FPP) to yield (2Z,6Z,10Z,14Z,18Z,22Z,26Z,30Z,34E,38E)-undecaprenyl diphosphate (di-trans,octa-cis-UPP). UPP is the precursor of glycosyl carrier lipid in the biosynthesis of bacterial cell wall polysaccharide components such as peptidoglycan and lipopolysaccharide. This is Ditrans,polycis-undecaprenyl-diphosphate synthase ((2E,6E)-farnesyl-diphosphate specific) from Pseudomonas putida (strain ATCC 47054 / DSM 6125 / CFBP 8728 / NCIMB 11950 / KT2440).